We begin with the raw amino-acid sequence, 245 residues long: 1-(5-phosphoribosyl)-5-[(5-phosphoribosylamino)methylideneamino] imidazole-4-carboxamide isomerase (245 aa).

Catalysis depends on Asp-8, which acts as the Proton acceptor. The active-site Proton donor is the Asp-130.

Belongs to the HisA/HisF family.

The protein localises to the cytoplasm. The catalysed reaction is 1-(5-phospho-beta-D-ribosyl)-5-[(5-phospho-beta-D-ribosylamino)methylideneamino]imidazole-4-carboxamide = 5-[(5-phospho-1-deoxy-D-ribulos-1-ylimino)methylamino]-1-(5-phospho-beta-D-ribosyl)imidazole-4-carboxamide. Its pathway is amino-acid biosynthesis; L-histidine biosynthesis; L-histidine from 5-phospho-alpha-D-ribose 1-diphosphate: step 4/9. This is 1-(5-phosphoribosyl)-5-[(5-phosphoribosylamino)methylideneamino] imidazole-4-carboxamide isomerase from Marinobacter nauticus (strain ATCC 700491 / DSM 11845 / VT8) (Marinobacter aquaeolei).